The chain runs to 291 residues: tRNA dimethylallyltransferase (291 aa).

9 to 16 (GPTASGKT) is a binding site for ATP. Residue 11–16 (TASGKT) participates in substrate binding. The segment at 34-37 (DSLQ) is interaction with substrate tRNA.

The protein belongs to the IPP transferase family. As to quaternary structure, monomer. It depends on Mg(2+) as a cofactor.

It carries out the reaction adenosine(37) in tRNA + dimethylallyl diphosphate = N(6)-dimethylallyladenosine(37) in tRNA + diphosphate. Functionally, catalyzes the transfer of a dimethylallyl group onto the adenine at position 37 in tRNAs that read codons beginning with uridine, leading to the formation of N6-(dimethylallyl)adenosine (i(6)A). This chain is tRNA dimethylallyltransferase, found in Aster yellows witches'-broom phytoplasma (strain AYWB).